Reading from the N-terminus, the 427-residue chain is 3-phosphoshikimate 1-carboxyvinyltransferase (427 aa).

The 3-phosphoshikimate site is built by lysine 20, serine 21, and arginine 25. Lysine 20 is a phosphoenolpyruvate binding site. 2 residues coordinate phosphoenolpyruvate: glycine 92 and arginine 120. 3-phosphoshikimate is bound by residues serine 166, glutamine 168, aspartate 312, and lysine 339. Position 168 (glutamine 168) interacts with phosphoenolpyruvate. Catalysis depends on aspartate 312, which acts as the Proton acceptor. Phosphoenolpyruvate contacts are provided by arginine 343 and arginine 385.

This sequence belongs to the EPSP synthase family. As to quaternary structure, monomer.

It is found in the cytoplasm. It carries out the reaction 3-phosphoshikimate + phosphoenolpyruvate = 5-O-(1-carboxyvinyl)-3-phosphoshikimate + phosphate. Its pathway is metabolic intermediate biosynthesis; chorismate biosynthesis; chorismate from D-erythrose 4-phosphate and phosphoenolpyruvate: step 6/7. Catalyzes the transfer of the enolpyruvyl moiety of phosphoenolpyruvate (PEP) to the 5-hydroxyl of shikimate-3-phosphate (S3P) to produce enolpyruvyl shikimate-3-phosphate and inorganic phosphate. This chain is 3-phosphoshikimate 1-carboxyvinyltransferase, found in Streptococcus pyogenes serotype M28 (strain MGAS6180).